The chain runs to 383 residues: Neuropeptide Y receptor type 1 (383 aa).

Topologically, residues 1–44 (MNSTLSSQVENHSIYYNFSEKNSQFLAFENDDCHLPLAMIFTLA) are extracellular. N-linked (GlcNAc...) asparagine glycans are attached at residues Asn-2, Asn-11, and Asn-17. The chain crosses the membrane as a helical span at residues 45 to 65 (LAYGAVIILGVSGNLALIIII). Topologically, residues 66–76 (LKQKEMRNVTN) are cytoplasmic. The helical transmembrane segment at 77 to 97 (ILIVNLSFSDLLVAIMCLPFT) threads the bilayer. The Extracellular segment spans residues 98–116 (FVYTLMDHWVFGEVMCKLN). Cys-113 and Cys-198 are joined by a disulfide. Residues 117-137 (PFVQCVSITVSIFSLVLIAVE) form a helical membrane-spanning segment. Residues 138-154 (RHQLIINPRGWRPSNRH) are Cytoplasmic-facing. Residues 155-175 (AYVGIAVIWVLAVASSLPFLI) form a helical membrane-spanning segment. Residues 176–211 (YQVLTDEPFQNVTLDAFKDKYVCFDKFLSDSHRLSY) lie on the Extracellular side of the membrane. The helical transmembrane segment at 212–232 (TTLLLVLQYFGPLCFIFICYF) threads the bilayer. The Cytoplasmic segment spans residues 233-260 (KIYIRLKRRNNMMDKMRDNKYRSSETKR). Residues 261-281 (INVMLLSIVVAFAVCWLPLTI) form a helical membrane-spanning segment. Topologically, residues 282–299 (FNTVFDWNHQIIATCNHN) are extracellular. The chain crosses the membrane as a helical span at residues 300-320 (LLFLLCHLTAMISTCINPIFY). Topologically, residues 321-383 (GFLNKNFQRD…KIHSDDNEKI (63 aa)) are cytoplasmic. Cys-338 is lipidated: S-palmitoyl cysteine. Phosphoserine is present on Ser-368.

It belongs to the G-protein coupled receptor 1 family.

It is found in the cell membrane. Its function is as follows. Receptor for neuropeptide Y and peptide YY. The chain is Neuropeptide Y receptor type 1 (NPY1R) from Sus scrofa (Pig).